The sequence spans 522 residues: MALANSRPLQIPTLENEILHNSNSPVFQLNSMGFTTRADTISNPGTDLIGNQPGMALDDNNLAGSSFSSSQEIKATKPKKDFGAPKKDNPLLEISKLIPVTGERPKPENRDSPLDDDVLHAVFLILWEMDPNQQGMTVKQLCDLLLQKHPDMSNLSTKLSNLISAKLNAYVKKIEKGEKTLTYALSREWSNSSPRRMLYIYRGILSPDYKEHAQAVTMQLKQQLETSGDTSDFNSNGKKKRESSSNQLVNNDSYSSSMTDMKNMSSNSSFSKNLNVGNLAFSLSPEFNIPYSTSPVSLNLSPSMSNNQQQLLTPNSASKSKNNNKKRNYMDEDTNESMTEPKKTKTTKPGKQTKSQSLSVLSTPKKGSSASLSTFASSKNISPDSSLSHNASSNTYVTAAAAAPRLSKLLPKNGFKKNSRSSSELAAIHKVISTQTPIESSSESSQYNSSSSSPVNSAAASSAESLSDINSSQDNGRESNPSSQESRNEVTNWMKIVRNGFLTHDIESPESITLDDLENIFN.

4 disordered regions span residues 56 to 88 (ALDD…PKKD), 222 to 268 (QQLE…SSNS), 300 to 391 (LSPS…SHNA), and 433 to 489 (STQT…SRNE). The segment covering 62-73 (LAGSSFSSSQEI) has biased composition (polar residues). Basic and acidic residues predominate over residues 74–88 (KATKPKKDFGAPKKD). Polar residues-rich tracts occupy residues 222-236 (QQLE…FNSN), 244-260 (SSNQ…SMTD), 300-314 (LSPS…LLTP), and 355-366 (SQSLSVLSTPKK). Residues 368-378 (SSASLSTFASS) are compositionally biased toward low complexity. Over residues 379–391 (KNISPDSSLSHNA) the composition is skewed to polar residues. Over residues 439–467 (ESSSESSQYNSSSSSPVNSAAASSAESLS) the composition is skewed to low complexity. Residues 468–489 (DINSSQDNGRESNPSSQESRNE) show a composition bias toward polar residues.

Functionally, involved in nuclear control of mitochondria. The chain is Protein GDS1 (GDS1) from Saccharomyces cerevisiae (strain ATCC 204508 / S288c) (Baker's yeast).